The following is a 429-amino-acid chain: MSSVVVVGTQWGDEGKGKITDFLSEHAEVVARYQGGNNAGHTIVFGGVKYKLHLIPSGIFYKEKICVIGNGLVVDPKALLEELKYLHDRGVSTDNLRVSNRAHVILPYHLKQDELEEASKGDNKIGTTKKGIGPAYMDKAARIGIRMADLLDREAFKEKLEQNLAQKNRLFEKMYDTEGFSVDEIFEEYFEYGQQIAQYVCDTSVVLNDALDNNHRVLFEGAQGVMLDIDHGTYPFVTSSNPIAGGVTVGTGVGPAKVTRVVGVCKAYTSRVGDGPFPTELHDEIGHQIREVGREYGTTTGRPRRVGWFDSVVVRHARRVSGLTDLSLNSIDVLTGIPTLKICVAYKCDGKVIDEVPANLNILAKCEPVYEELPGWTEDITGVRSLDELPENARKYVERVSELTGIQLSMFSVGPDRNQTNIVRNVYEA.

GTP contacts are provided by residues Gly12–Lys18 and Gly40–Thr42. The active-site Proton acceptor is Asp13. Mg(2+) contacts are provided by Asp13 and Gly40. IMP contacts are provided by residues Asp13–Lys16, Asn38–His41, Thr128, Arg142, Gln223, Thr238, and Arg302. Residue His41 is the Proton donor of the active site. Residue Thr298–Arg304 coordinates substrate. Residues Arg304, Ser330–Asp332, and Ser412–Gly414 contribute to the GTP site.

It belongs to the adenylosuccinate synthetase family. Homodimer. The cofactor is Mg(2+).

It is found in the cytoplasm. The enzyme catalyses IMP + L-aspartate + GTP = N(6)-(1,2-dicarboxyethyl)-AMP + GDP + phosphate + 2 H(+). Its pathway is purine metabolism; AMP biosynthesis via de novo pathway; AMP from IMP: step 1/2. Plays an important role in the de novo pathway of purine nucleotide biosynthesis. Catalyzes the first committed step in the biosynthesis of AMP from IMP. The chain is Adenylosuccinate synthetase from Bacillus thuringiensis (strain Al Hakam).